We begin with the raw amino-acid sequence, 472 residues long: Inactive CLIP domain-containing serine protease A3 (472 aa).

2 helical membrane passes run 51–71 (ISFV…WSSM) and 78–98 (LPAL…HTYA). N-linked (GlcNAc...) asparagine glycans are attached at residues asparagine 122, asparagine 133, asparagine 149, and asparagine 152. One can recognise a Peptidase S1 domain in the interval 223–470 (VAAAKAPAAG…YVPWITSTVS (248 aa)). 3 cysteine pairs are disulfide-bonded: cysteine 354-cysteine 428, cysteine 386-cysteine 408, and cysteine 418-cysteine 446.

This sequence belongs to the peptidase S1 family. CLIP subfamily. As to expression, expressed at highest levels in head and salivary gland. Expressed in ovary and carcass. Minimal expression in midgut.

It localises to the membrane. Probable inactive serine protease. Induces migration of cultured mouse embryonic fibroblasts. Its function is as follows. (Microbial infection) Promotes dengue virus type 2 replication in the host. The chain is Inactive CLIP domain-containing serine protease A3 from Aedes aegypti (Yellowfever mosquito).